Here is a 257-residue protein sequence, read N- to C-terminus: Imidazole glycerol phosphate synthase subunit HisF (257 aa).

Residues D12 and D131 contribute to the active site.

Belongs to the HisA/HisF family. In terms of assembly, heterodimer of HisH and HisF.

Its subcellular location is the cytoplasm. It carries out the reaction 5-[(5-phospho-1-deoxy-D-ribulos-1-ylimino)methylamino]-1-(5-phospho-beta-D-ribosyl)imidazole-4-carboxamide + L-glutamine = D-erythro-1-(imidazol-4-yl)glycerol 3-phosphate + 5-amino-1-(5-phospho-beta-D-ribosyl)imidazole-4-carboxamide + L-glutamate + H(+). Its pathway is amino-acid biosynthesis; L-histidine biosynthesis; L-histidine from 5-phospho-alpha-D-ribose 1-diphosphate: step 5/9. In terms of biological role, IGPS catalyzes the conversion of PRFAR and glutamine to IGP, AICAR and glutamate. The HisF subunit catalyzes the cyclization activity that produces IGP and AICAR from PRFAR using the ammonia provided by the HisH subunit. The polypeptide is Imidazole glycerol phosphate synthase subunit HisF (Paraburkholderia phytofirmans (strain DSM 17436 / LMG 22146 / PsJN) (Burkholderia phytofirmans)).